Here is a 486-residue protein sequence, read N- to C-terminus: UDP-N-acetylmuramate--L-alanine ligase (486 aa).

ATP is bound at residue 123–129 (GTHGKTT).

It belongs to the MurCDEF family.

Its subcellular location is the cytoplasm. It carries out the reaction UDP-N-acetyl-alpha-D-muramate + L-alanine + ATP = UDP-N-acetyl-alpha-D-muramoyl-L-alanine + ADP + phosphate + H(+). It participates in cell wall biogenesis; peptidoglycan biosynthesis. Functionally, cell wall formation. This Pseudomonas savastanoi pv. phaseolicola (strain 1448A / Race 6) (Pseudomonas syringae pv. phaseolicola (strain 1448A / Race 6)) protein is UDP-N-acetylmuramate--L-alanine ligase.